Here is a 130-residue protein sequence, read N- to C-terminus: S-adenosylmethionine decarboxylase proenzyme (130 aa).

S64 acts as the Schiff-base intermediate with substrate; via pyruvic acid in catalysis. S64 carries the post-translational modification Pyruvic acid (Ser); by autocatalysis. The active-site Proton acceptor; for processing activity is H69. The active-site Proton donor; for catalytic activity is the C84.

Belongs to the prokaryotic AdoMetDC family. Type 1 subfamily. As to quaternary structure, heterotetramer of two alpha and two beta chains arranged as a dimer of alpha/beta heterodimers. Pyruvate serves as cofactor. Post-translationally, is synthesized initially as an inactive proenzyme. Formation of the active enzyme involves a self-maturation process in which the active site pyruvoyl group is generated from an internal serine residue via an autocatalytic post-translational modification. Two non-identical subunits are generated from the proenzyme in this reaction, and the pyruvate is formed at the N-terminus of the alpha chain, which is derived from the carboxyl end of the proenzyme. The post-translation cleavage follows an unusual pathway, termed non-hydrolytic serinolysis, in which the side chain hydroxyl group of the serine supplies its oxygen atom to form the C-terminus of the beta chain, while the remainder of the serine residue undergoes an oxidative deamination to produce ammonia and the pyruvoyl group blocking the N-terminus of the alpha chain.

The enzyme catalyses S-adenosyl-L-methionine + H(+) = S-adenosyl 3-(methylsulfanyl)propylamine + CO2. It functions in the pathway amine and polyamine biosynthesis; S-adenosylmethioninamine biosynthesis; S-adenosylmethioninamine from S-adenosyl-L-methionine: step 1/1. Catalyzes the decarboxylation of S-adenosylmethionine to S-adenosylmethioninamine (dcAdoMet), the propylamine donor required for the synthesis of the polyamines spermine and spermidine from the diamine putrescine. This is S-adenosylmethionine decarboxylase proenzyme from Picrophilus torridus (strain ATCC 700027 / DSM 9790 / JCM 10055 / NBRC 100828 / KAW 2/3).